The primary structure comprises 721 residues: BBSome complex member BBS2 (721 aa).

The stretch at 325 to 369 (KGNLLDTSVEQDLIRELSQKKQNLLLELRNYEESTKAELSSPLNE) forms a coiled coil.

As to quaternary structure, part of BBSome complex, that contains BBS1, BBS2, BBS4, BBS5, BBS7, BBS8/TTC8, BBS9 and BBIP10. Interacts (via C-terminus) with BBS7. Interacts (via coiled coil domain) with MKKS. Interacts with CCDC28B. Interacts with DLEC1.

The protein localises to the cell projection. Its subcellular location is the cilium membrane. The protein resides in the cytoplasm. It localises to the cytoskeleton. It is found in the microtubule organizing center. The protein localises to the centrosome. Its subcellular location is the centriolar satellite. In terms of biological role, the BBSome complex is thought to function as a coat complex required for sorting of specific membrane proteins to the primary cilia. The BBSome complex is required for ciliogenesis but is dispensable for centriolar satellite function. This ciliogenic function is mediated in part by the Rab8 GDP/GTP exchange factor, which localizes to the basal body and contacts the BBSome. Rab8(GTP) enters the primary cilium and promotes extension of the ciliary membrane. Firstly the BBSome associates with the ciliary membrane and binds to RAB3IP/Rabin8, the guanosyl exchange factor (GEF) for Rab8 and then the Rab8-GTP localizes to the cilium and promotes docking and fusion of carrier vesicles to the base of the ciliary membrane. The BBSome complex, together with the LTZL1, controls SMO ciliary trafficking and contributes to the sonic hedgehog (SHH) pathway regulation. Required for proper BBSome complex assembly and its ciliary localization. The polypeptide is BBSome complex member BBS2 (Bbs2) (Mus musculus (Mouse)).